The following is a 256-amino-acid chain: Follistatin-related protein 3 (256 aa).

An N-terminal signal peptide occupies residues 1–23 (MRPGALWPLLWGALVWAVGSVGA). Positions 34-105 (GVCWLQQGKE…SCDGVECGPG (72 aa)) constitute a TB domain. Disulfide bonds link Cys-36–Cys-59, Cys-46–Cys-90, Cys-60–Cys-93, Cys-97–Cys-108, Cys-102–Cys-117, Cys-119–Cys-151, Cys-123–Cys-144, and Cys-133–Cys-165. The N-linked (GlcNAc...) asparagine glycan is linked to Asn-71. Positions 97 to 117 (CDGVECGPGKACRMLGGRPHC) constitute a Follistatin-like 1 domain. Kazal-like domains lie at 111 to 167 (LGGR…RCQK) and 187 to 243 (SAHC…ICTG). One can recognise a Follistatin-like 2 domain in the interval 168–191 (SCAQVVCPRPQSCLVDQTGSAHCV). Disulfide bonds link Cys-193–Cys-227, Cys-198–Cys-220, and Cys-209–Cys-241. A glycan (N-linked (GlcNAc...) asparagine) is linked at Asn-213.

As to quaternary structure, interacts with INHBA and INHBB. Interacts with FN1. Interacts with ADAM12. Interacts with MLLT10; the interaction enhances MLLT10 in vitro transcriptional activity and self-association. Interacts with MSTN.

The protein resides in the secreted. It is found in the nucleus. Functionally, the secreted form is a binding and antagonizing protein for members of the TGF-beta family, such as activin, BMP2 and MSTN. Inhibits activin A-, activin B-, BMP2- and MSDT-induced cellular signaling; more effective on activin A than on activin B. Involved in bone formation; inhibits osteoclast differentiation. Involved in hematopoiesis; involved in differentiation of hemopoietic progenitor cells, increases hematopoietic cell adhesion to fibronectin and seems to contribute to the adhesion of hematopoietic precursor cells to the bone marrow stroma. The nuclear form is probably involved in transcriptional regulation via interaction with MLLT10. This is Follistatin-related protein 3 (Fstl3) from Rattus norvegicus (Rat).